The chain runs to 128 residues: Class I hydrophobin 19 (128 aa).

Disulfide bonds link Cys48–Cys107, Cys55–Cys101, Cys56–Cys88, and Cys108–Cys121. An N-linked (GlcNAc...) asparagine glycan is attached at Asn110.

It belongs to the fungal hydrophobin family. In terms of assembly, self-assembles to form functional amyloid fibrils called rodlets. Self-assembly into fibrillar rodlets occurs spontaneously at hydrophobic:hydrophilic interfaces and the rodlets further associate laterally to form amphipathic monolayers.

It localises to the secreted. It is found in the cell wall. Its function is as follows. Aerial growth, conidiation, and dispersal of filamentous fungi in the environment rely upon a capability of their secreting small amphipathic proteins called hydrophobins (HPBs) with low sequence identity. Class I can self-assemble into an outermost layer of rodlet bundles on aerial cell surfaces, conferring cellular hydrophobicity that supports fungal growth, development and dispersal; whereas Class II form highly ordered films at water-air interfaces through intermolecular interactions but contribute nothing to the rodlet structure. The polypeptide is Class I hydrophobin 19 (Pleurotus ostreatus (strain PC15) (Oyster mushroom)).